A 907-amino-acid chain; its full sequence is Coatomer subunit beta'-1 (907 aa).

9 WD repeats span residues 13–52 (QRSE…MVKS), 55–94 (VSEL…KVKV), 97–136 (AHTD…MCTQ), 140–180 (GHSH…PNFT), 183–224 (GHQK…CVQT), 227–266 (GHTH…LENT), 269–309 (YGLE…ASMD), 351–389 (SCDL…NRSF), and 461–501 (RIDV…SYLE). Acidic residues-rich tracts occupy residues 850-866 (ETED…EEVL) and 874-887 (STDE…DEPE). Positions 850–887 (ETEDALDENGEPDEEVLEENKVEESTDEAVEVDADEPE) are disordered.

The protein belongs to the WD repeat COPB2 family. Oligomeric complex that consists of at least the alpha, beta, beta', gamma, delta, epsilon and zeta subunits.

Its subcellular location is the cytoplasm. It is found in the golgi apparatus membrane. It localises to the cytoplasmic vesicle. The protein localises to the COPI-coated vesicle membrane. The coatomer is a cytosolic protein complex that binds to dilysine motifs and reversibly associates with Golgi non-clathrin-coated vesicles, which further mediate biosynthetic protein transport from the ER, via the Golgi up to the trans Golgi network. Coatomer complex is required for budding from Golgi membranes, and is essential for the retrograde Golgi-to-ER transport of dilysine-tagged proteins. The sequence is that of Coatomer subunit beta'-1 from Oryza sativa subsp. japonica (Rice).